Consider the following 908-residue polypeptide: Protein translocase subunit SecA (908 aa).

Residues Gln-87, 105–109 (GEGKT), and Asp-511 contribute to the ATP site. A compositionally biased stretch (basic and acidic residues) spans 559 to 570 (ERHESRRIDNQL). Disordered stretches follow at residues 559–582 (ERHE…DPGS) and 841–908 (RRRR…GRLE). Residues 847–856 (LAQQMQRAQA) show a composition bias toward low complexity. A compositionally biased stretch (acidic residues) spans 862-873 (TEEDSDAEEQAE). Residues Cys-892, Cys-894, Cys-903, and His-904 each coordinate Zn(2+). Basic residues predominate over residues 898–908 (KKYKQCHGRLE).

Belongs to the SecA family. Monomer and homodimer. Part of the essential Sec protein translocation apparatus which comprises SecA, SecYEG and auxiliary proteins SecDF-YajC and YidC. The cofactor is Zn(2+).

The protein localises to the cell inner membrane. It localises to the cytoplasm. It carries out the reaction ATP + H2O + cellular proteinSide 1 = ADP + phosphate + cellular proteinSide 2.. Part of the Sec protein translocase complex. Interacts with the SecYEG preprotein conducting channel. Has a central role in coupling the hydrolysis of ATP to the transfer of proteins into and across the cell membrane, serving both as a receptor for the preprotein-SecB complex and as an ATP-driven molecular motor driving the stepwise translocation of polypeptide chains across the membrane. This chain is Protein translocase subunit SecA, found in Hahella chejuensis (strain KCTC 2396).